The following is a 323-amino-acid chain: MEIRVANKYALGKKLGSGSFGDIYVAKDIVTMEEFAVKLESTRSKHPQLLYESKLYKILGGGIGVPKVYWYGIEGDFTIMVLDLLGPSLEDLFTLCNRKFSLKTVLMTADQMLNRIEYVHSKNFIHRDIKPDNFLIGRGKKVTLIHIIDFGLAKKYRDSRSHTHIPYKEGKNLTGTARYASINTHLGIEQSRRDDIEALGYVLMYFLRGSLPWQGLKAISKKDKYDKIMEKKISTSVEVLCRNTSFEFVTYLNYCRSLRFEDRPDYTYLRRLLKDLFIREGFTYDFLFDWTCVYASEKDKKKMLENKNRFDQIADQEGRVKQN.

The 270-residue stretch at 9–278 (YALGKKLGSG…LRRLLKDLFI (270 aa)) folds into the Protein kinase domain. ATP contacts are provided by residues 15–23 (LGSGSFGDI) and Lys38. Asp128 (proton acceptor) is an active-site residue.

The protein belongs to the protein kinase superfamily. CK1 Ser/Thr protein kinase family. Casein kinase I subfamily. Requires Mg(2+) as cofactor.

The protein resides in the cytoplasm. It is found in the cytoplasmic vesicle. The protein localises to the secretory vesicle. Its subcellular location is the microneme. It localises to the secreted. The protein resides in the host cell surface. The enzyme catalyses L-seryl-[protein] + ATP = O-phospho-L-seryl-[protein] + ADP + H(+). It catalyses the reaction L-threonyl-[protein] + ATP = O-phospho-L-threonyl-[protein] + ADP + H(+). Its function is as follows. Serine/threonine-protein kinase likely to be involved in many cellular processes. The protein is Casein kinase I (CK1) of Plasmodium yoelii yoelii.